Here is a 1086-residue protein sequence, read N- to C-terminus: Transcription initiation factor TFIID subunit 2 (1086 aa).

Polar residues predominate over residues 1-11; that stretch reads MDFSEASTSGD. Disordered regions lie at residues 1–53 and 1064–1086; these read MDFS…PPPV and GYEA…NLMQ. Composition is skewed to pro residues over residues 19–36 and 44–53; these read PFPP…PPLA and APPPLQPPPV. The span at 1067 to 1078 shows a compositional bias: basic and acidic residues; the sequence is AARRSPPRRDFG.

This sequence belongs to the TAF2 family. Component of the TFIID basal transcription factor complex, composed of TATA-box-binding protein tbp-1, and a number of TBP-associated factors (TAFs).

It is found in the nucleus. Its function is as follows. The TFIID basal transcription factor complex plays a major role in the initiation of RNA polymerase II (Pol II)-dependent transcription. TFIID recognizes and binds promoters via its subunit tbp-1, a TATA-box-binding protein, and promotes assembly of the pre-initiation complex (PIC). The TFIID complex consists of tbp-1 and TBP-associated factors (TAFs), including taf-2. May regulate RNA polymerase II activity and thereby may control transcription initiation by RNA polymerase II. This chain is Transcription initiation factor TFIID subunit 2, found in Caenorhabditis elegans.